The following is a 278-amino-acid chain: uncharacterized protein (278 aa).

Residues 1–16 (MFGLKVKDAQKDDQKS) are compositionally biased toward basic and acidic residues. Disordered stretches follow at residues 1 to 86 (MFGL…RGSN) and 98 to 126 (FGTT…TPWL). Composition is skewed to low complexity over residues 33-45 (QGTS…RGSS) and 99-117 (GTTS…STPS).

It belongs to the adhesin P1 family.

This is an uncharacterized protein from Mycoplasma pneumoniae (strain ATCC 29342 / M129 / Subtype 1) (Mycoplasmoides pneumoniae).